Here is a 467-residue protein sequence, read N- to C-terminus: Nodulation protein T (467 aa).

A signal peptide spans 1–17 (MRFTRYTTPFFSLLLSG). A lipid anchor (N-palmitoyl cysteine) is attached at cysteine 18. Cysteine 18 carries S-diacylglycerol cysteine lipidation.

This sequence belongs to the outer membrane factor (OMF) (TC 1.B.17) family.

Its subcellular location is the cell membrane. This chain is Nodulation protein T (nodT), found in Rhizobium leguminosarum bv. trifolii.